The sequence spans 98 residues: NADH-ubiquinone oxidoreductase chain 4L (98 aa).

3 consecutive transmembrane segments (helical) span residues 1–21 (MVLI…GVLI), 36–56 (MMLS…MFSI), and 61–81 (LILL…LVTI).

The protein belongs to the complex I subunit 4L family. Core subunit of respiratory chain NADH dehydrogenase (Complex I) which is composed of 45 different subunits.

It is found in the mitochondrion inner membrane. It catalyses the reaction a ubiquinone + NADH + 5 H(+)(in) = a ubiquinol + NAD(+) + 4 H(+)(out). Its function is as follows. Core subunit of the mitochondrial membrane respiratory chain NADH dehydrogenase (Complex I) which catalyzes electron transfer from NADH through the respiratory chain, using ubiquinone as an electron acceptor. Part of the enzyme membrane arm which is embedded in the lipid bilayer and involved in proton translocation. The polypeptide is NADH-ubiquinone oxidoreductase chain 4L (MT-ND4L) (Metachirus nudicaudatus (Brown four-eyed opossum)).